Reading from the N-terminus, the 411-residue chain is Ornithine aminotransferase (411 aa).

Lysine 257 is subject to N6-(pyridoxal phosphate)lysine.

The protein belongs to the class-III pyridoxal-phosphate-dependent aminotransferase family. OAT subfamily. The cofactor is pyridoxal 5'-phosphate.

The protein resides in the cytoplasm. The catalysed reaction is a 2-oxocarboxylate + L-ornithine = L-glutamate 5-semialdehyde + an L-alpha-amino acid. Its pathway is amino-acid biosynthesis; L-proline biosynthesis; L-glutamate 5-semialdehyde from L-ornithine: step 1/1. Its function is as follows. Catalyzes the interconversion of ornithine to glutamate semialdehyde. The protein is Ornithine aminotransferase of Bordetella bronchiseptica (strain ATCC BAA-588 / NCTC 13252 / RB50) (Alcaligenes bronchisepticus).